The following is a 177-amino-acid chain: Flavodoxin (177 aa).

Residues 4-173 (IGIFFGSDTG…RIDTWLDKLK (170 aa)) form the Flavodoxin-like domain.

This sequence belongs to the flavodoxin family. FMN serves as cofactor.

In terms of biological role, low-potential electron donor to a number of redox enzymes. NifF is the electron donor to nitrogenase. The protein is Flavodoxin (nifF) of Enterobacter agglomerans (Erwinia herbicola).